The primary structure comprises 458 residues: Alpha-glucosides-binding periplasmic protein AglE (458 aa).

Residues 1–27 form the signal peptide; it reads MKRSLLIGVAAFALLAGTAGLAGTAGA.

Belongs to the bacterial solute-binding protein 1 family.

It is found in the periplasm. Functionally, part of the binding-protein-dependent transport system for alpha-glucosides such as sucrose, maltose and trehalose. This chain is Alpha-glucosides-binding periplasmic protein AglE (aglE), found in Rhizobium meliloti (strain 1021) (Ensifer meliloti).